The sequence spans 967 residues: Isoleucine--tRNA ligase (967 aa).

The 'HIGH' region signature appears at 64–74 (PYANGNIHIGH). Glutamate 600 contacts L-isoleucyl-5'-AMP. The 'KMSKS' region signature appears at 641–645 (KQSKS). Lysine 644 contacts ATP.

It belongs to the class-I aminoacyl-tRNA synthetase family. IleS type 1 subfamily. Monomer.

It localises to the cytoplasm. It catalyses the reaction tRNA(Ile) + L-isoleucine + ATP = L-isoleucyl-tRNA(Ile) + AMP + diphosphate. Its function is as follows. Catalyzes the attachment of isoleucine to tRNA(Ile). As IleRS can inadvertently accommodate and process structurally similar amino acids such as valine, to avoid such errors it has two additional distinct tRNA(Ile)-dependent editing activities. One activity is designated as 'pretransfer' editing and involves the hydrolysis of activated Val-AMP. The other activity is designated 'posttransfer' editing and involves deacylation of mischarged Val-tRNA(Ile). This Agrobacterium fabrum (strain C58 / ATCC 33970) (Agrobacterium tumefaciens (strain C58)) protein is Isoleucine--tRNA ligase.